The chain runs to 386 residues: Succinate--CoA ligase [ADP-forming] subunit beta (386 aa).

In terms of domain architecture, ATP-grasp spans 9–244 (KAILRSYGVS…LDEEDPKEIE (236 aa)). Residues lysine 46, 53-55 (GRG), glutamate 99, cysteine 102, and glutamate 107 each bind ATP. Positions 199 and 213 each coordinate Mg(2+). Residues asparagine 264 and 321 to 323 (GIM) contribute to the substrate site.

The protein belongs to the succinate/malate CoA ligase beta subunit family. In terms of assembly, heterotetramer of two alpha and two beta subunits. The cofactor is Mg(2+).

It catalyses the reaction succinate + ATP + CoA = succinyl-CoA + ADP + phosphate. It carries out the reaction GTP + succinate + CoA = succinyl-CoA + GDP + phosphate. Its pathway is carbohydrate metabolism; tricarboxylic acid cycle; succinate from succinyl-CoA (ligase route): step 1/1. Succinyl-CoA synthetase functions in the citric acid cycle (TCA), coupling the hydrolysis of succinyl-CoA to the synthesis of either ATP or GTP and thus represents the only step of substrate-level phosphorylation in the TCA. The beta subunit provides nucleotide specificity of the enzyme and binds the substrate succinate, while the binding sites for coenzyme A and phosphate are found in the alpha subunit. The polypeptide is Succinate--CoA ligase [ADP-forming] subunit beta (Bacillus cytotoxicus (strain DSM 22905 / CIP 110041 / 391-98 / NVH 391-98)).